Reading from the N-terminus, the 202-residue chain is Small ribosomal subunit protein uS4c (202 aa).

The segment at 20–43 (GLTRKTTRRNSRPGQHGDQPRKPS) is disordered. Residues 90–152 (MRLDNIVFRL…ARSKQLVENY (63 aa)) form the S4 RNA-binding domain.

This sequence belongs to the universal ribosomal protein uS4 family. As to quaternary structure, part of the 30S ribosomal subunit. Contacts protein S5. The interaction surface between S4 and S5 is involved in control of translational fidelity.

Its subcellular location is the plastid. The protein resides in the chloroplast. One of the primary rRNA binding proteins, it binds directly to 16S rRNA where it nucleates assembly of the body of the 30S subunit. Functionally, with S5 and S12 plays an important role in translational accuracy. This Rhodomonas salina (Cryptomonas salina) protein is Small ribosomal subunit protein uS4c (rps4).